The chain runs to 268 residues: Stomatin homolog PYRAB06580 (268 aa).

A helical transmembrane segment spans residues 1–21; that stretch reads MILPTNFFVTTIILLFILIFL. Coiled-coil stretches lie at residues 125–152 and 178–213; these read GQAH…EATD and KQAE…ISEH.

The protein belongs to the band 7/mec-2 family. As to quaternary structure, homotrimer.

The protein resides in the membrane. This chain is Stomatin homolog PYRAB06580, found in Pyrococcus abyssi (strain GE5 / Orsay).